Consider the following 332-residue polypeptide: MTQAADARDRPVLVIAGPTCSGKSALAMAVARAVDGTIVNADSMQVYRDLRILTARPTPADEAECPHRLYGVLPATETGSVAWWRGRAVAEIEAAWAAGRTPILCGGTGMYLRALTDGLTDIPDPGPEARAEARRLVDAEGPAALHDRLAAVDPESAAALHPADSQRVARAWEVWSGTGHGMAHWRRTATLPPLACRRVAVRLDPPRDTLRAAIAVRFAAMVQGGALDEVRALLAQGLPPALPAMRAHGVPELAAHLRGDLTLDEATHRAVLATGRYTRRQSTWFAHHDLAGPADSLVIGTRMGGDAQQMERNYADAVSFILMRIDVGRQFP.

G17–S24 serves as a coordination point for ATP. Residue T19–S24 coordinates substrate. Interaction with substrate tRNA stretches follow at residues D42–Q45 and Q166–R170.

It belongs to the IPP transferase family. Monomer. It depends on Mg(2+) as a cofactor.

It catalyses the reaction adenosine(37) in tRNA + dimethylallyl diphosphate = N(6)-dimethylallyladenosine(37) in tRNA + diphosphate. In terms of biological role, catalyzes the transfer of a dimethylallyl group onto the adenine at position 37 in tRNAs that read codons beginning with uridine, leading to the formation of N6-(dimethylallyl)adenosine (i(6)A). The chain is tRNA dimethylallyltransferase from Gluconacetobacter diazotrophicus (strain ATCC 49037 / DSM 5601 / CCUG 37298 / CIP 103539 / LMG 7603 / PAl5).